Reading from the N-terminus, the 86-residue chain is Small ribosomal subunit protein bS20 (86 aa).

It belongs to the bacterial ribosomal protein bS20 family.

Functionally, binds directly to 16S ribosomal RNA. This chain is Small ribosomal subunit protein bS20, found in Exiguobacterium sibiricum (strain DSM 17290 / CCUG 55495 / CIP 109462 / JCM 13490 / 255-15).